The primary structure comprises 468 residues: MKTFMDKDFLLYNETAKTLFYNYACKCPIFDYHCHLNPKEIAENKKFKNITEIWLYGDHYKWRMMRANGIDEKFITGDASDYDKFIAWVKTVPNLIGNPLYHWSHLELQRYFDIHEVINEDNADTIWEKANQKLQNMTVKDILKKFKVHTIGTTDDPTDNLEYHKLINEGKAQIGKIYTKVVPSFRPDKAINIEMPDFSDYIKKLENASKINIKDINSLTEALYNRIDYFKSLGCVSSDCSLSIVPFNLDDEKNIDAIFKKAMNKESLNFEDIEKYKTYILIKLIKKYKESNLVMQIHISAMRNNNEVMFKKLGADTGYDSVGDSNIIEKLSFLLKTANNDGGLPKIIFYSLNHKDYYPLSTLMGCFQEGSIKGKMQLGSAWWFCDNRDGMEEQIKILANTGSLALFVGMLTDSRSFLSYSRHEYFRRILCNIIGEWADKGEVPNDIKYLGSIIENICFNNSNIYFNN.

This sequence belongs to the metallo-dependent hydrolases superfamily. Uronate isomerase family.

It catalyses the reaction D-glucuronate = D-fructuronate. The catalysed reaction is aldehydo-D-galacturonate = keto-D-tagaturonate. The protein operates within carbohydrate metabolism; pentose and glucuronate interconversion. The chain is Uronate isomerase from Brachyspira hyodysenteriae (strain ATCC 49526 / WA1).